A 253-amino-acid chain; its full sequence is FGFR1 oncogene partner 2 (253 aa).

The stretch at 5–104 (IEKALADAKA…SALELIMSKY (100 aa)) forms a coiled coil. S141 carries the post-translational modification Phosphoserine. Residues 160-223 (LERRHLEANQ…LREILQITRE (64 aa)) are a coiled coil. Residues 231 to 253 (DDASESTSLSALVTNSDLSLRKS) form a disordered region. A compositionally biased stretch (polar residues) spans 235–253 (ESTSLSALVTNSDLSLRKS).

The protein belongs to the SIKE family. Expressed in bone marrow, spleen and thymus.

The protein localises to the cytoplasm. Its function is as follows. May be involved in wound healing pathway. The sequence is that of FGFR1 oncogene partner 2 (FGFR1OP2) from Homo sapiens (Human).